A 448-amino-acid chain; its full sequence is uncharacterized protein (448 aa).

Residues 187-198 (SKGDRGDADDRG) show a composition bias toward basic and acidic residues. Disordered stretches follow at residues 187-221 (SKGDRGDADDRGPASVGSGGAPARGAGQQPELPTR), 243-270 (LQVPGGTSAAIPSASSTPSLPNLGGATM), and 291-361 (LSGL…LPNG). Positions 243-261 (LQVPGGTSAAIPSASSTPS) are enriched in low complexity. A compositionally biased stretch (basic and acidic residues) spans 307–334 (FDERGQEVRDPADYEHSNEPDERRADDR).

To M.tuberculosis Rv0025 and Rv0739.

This is an uncharacterized protein from Mycobacterium tuberculosis (strain ATCC 25618 / H37Rv).